The primary structure comprises 302 residues: Glutamate/aspartate import solute-binding protein (302 aa).

A signal peptide spans 1-22 (MQLRKLTTAMLVMGLSAGLAHA).

The protein belongs to the bacterial solute-binding protein 3 family. The complex is composed of two ATP-binding proteins (GltL), two transmembrane proteins (GltJ and GltK) and a solute-binding protein (GltI).

It is found in the periplasm. Its function is as follows. Part of the ABC transporter complex GltIJKL involved in glutamate and aspartate uptake. Binds to both glutamate and aspartate. This Salmonella typhimurium (strain LT2 / SGSC1412 / ATCC 700720) protein is Glutamate/aspartate import solute-binding protein (gltI).